A 90-amino-acid polypeptide reads, in one-letter code: Cuticle protein 9.5 (90 aa).

In terms of biological role, component of the cuticle of migratory locust which contains more than 100 different structural proteins. In Locusta migratoria (Migratory locust), this protein is Cuticle protein 9.5.